Here is a 29-residue protein sequence, read N- to C-terminus: Chassatide C10 (29 aa).

Positions 1-29 (GEYCGESCYLIPCFTPGCYCVSRQCVNKN) form a cross-link, cyclopeptide (Gly-Asn). 3 disulfide bridges follow: C4–C18, C8–C20, and C13–C25.

In terms of processing, this is a cyclic peptide.

Functionally, probably participates in a plant defense mechanism. Has no activity against bacteria up to a concentration of 80 uM. Has cytotoxic but no hemolytic activity. This Chassalia chartacea (Chassalia curviflora) protein is Chassatide C10.